Reading from the N-terminus, the 508-residue chain is Replication factor C large subunit (508 aa).

Residue 43 to 50 (GSPGIGKT) coordinates ATP. The disordered stretch occupies residues 425-508 (AVEHSGGVFE…DQQSGLSDFM (84 aa)). Acidic residues-rich tracts occupy residues 443 to 461 (GDSD…EESG) and 483 to 500 (TTDD…DDDQ).

It belongs to the activator 1 small subunits family. RfcL subfamily. As to quaternary structure, heteromultimer composed of small subunits (RfcS) and large subunits (RfcL).

Functionally, part of the RFC clamp loader complex which loads the PCNA sliding clamp onto DNA. The polypeptide is Replication factor C large subunit (Haloarcula marismortui (strain ATCC 43049 / DSM 3752 / JCM 8966 / VKM B-1809) (Halobacterium marismortui)).